Consider the following 558-residue polypeptide: Urocanate hydratase (558 aa).

NAD(+) contacts are provided by residues G54–G55, Q132, G178–G180, E198, N244–A245, Q265–H269, Y275–L276, and Y324. Residue C412 is part of the active site. NAD(+) is bound at residue G494.

Belongs to the urocanase family. It depends on NAD(+) as a cofactor.

It is found in the cytoplasm. It carries out the reaction 4-imidazolone-5-propanoate = trans-urocanate + H2O. It participates in amino-acid degradation; L-histidine degradation into L-glutamate; N-formimidoyl-L-glutamate from L-histidine: step 2/3. Functionally, catalyzes the conversion of urocanate to 4-imidazolone-5-propionate. This Acinetobacter baumannii (strain AB307-0294) protein is Urocanate hydratase.